The primary structure comprises 338 residues: Ribonucleoside-diphosphate reductase small subunit (338 aa).

Residues Asp81, Glu112, and His115 each contribute to the Fe cation site. Residue Tyr119 is part of the active site. Fe cation-binding residues include Glu174, Glu208, and His211.

It belongs to the ribonucleoside diphosphate reductase small chain family. Heterodimer of a large and a small subunit. It depends on Fe cation as a cofactor.

It is found in the cytoplasm. It catalyses the reaction a 2'-deoxyribonucleoside 5'-diphosphate + [thioredoxin]-disulfide + H2O = a ribonucleoside 5'-diphosphate + [thioredoxin]-dithiol. Provides the precursors necessary for DNA synthesis. Catalyzes the biosynthesis of deoxyribonucleotides from the corresponding ribonucleotides. The protein is Ribonucleoside-diphosphate reductase small subunit (rnrB-1) of Dictyostelium discoideum (Social amoeba).